A 557-amino-acid chain; its full sequence is Phosphoacetylglucosamine mutase (557 aa).

Catalysis depends on serine 67, which acts as the Phosphoserine intermediate. Mg(2+)-binding residues include serine 67, aspartate 298, aspartate 300, and aspartate 302. Residue serine 67 is modified to Phosphoserine. Residues 395–397 (EAN), 522–526 (RASGT), and arginine 531 contribute to the substrate site.

It belongs to the phosphohexose mutase family. The cofactor is Mg(2+).

It is found in the cytoplasm. It localises to the nucleus. It catalyses the reaction N-acetyl-alpha-D-glucosamine 1-phosphate = N-acetyl-D-glucosamine 6-phosphate. It participates in nucleotide-sugar biosynthesis; UDP-N-acetyl-alpha-D-glucosamine biosynthesis; N-acetyl-alpha-D-glucosamine 1-phosphate from alpha-D-glucosamine 6-phosphate (route I): step 2/2. Functionally, catalyzes the conversion of GlcNAc-6-P into GlcNAc-1-P during the synthesis of uridine diphosphate/UDP-GlcNAc, which is a biosynthetic precursor of chitin and also supplies the amino sugars for N-linked oligosaccharides of glycoproteins. Also has phosphoglucomutase activity. This is Phosphoacetylglucosamine mutase from Saccharomyces cerevisiae (strain ATCC 204508 / S288c) (Baker's yeast).